The sequence spans 388 residues: Ribosomal RNA large subunit methyltransferase F (388 aa).

Over residues 1-22 (MKTNNHNAKQAQTKTAKSNPSK) the composition is skewed to polar residues. Residues 1 to 51 (MKTNNHNAKQAQTKTAKSNPSKEVTKIKPKRVKNKPTAKAAKSTGLKTNAA) form a disordered region. Over residues 27 to 36 (IKPKRVKNKP) the composition is skewed to basic residues.

The protein belongs to the methyltransferase superfamily. METTL16/RlmF family.

The protein resides in the cytoplasm. It carries out the reaction adenosine(1618) in 23S rRNA + S-adenosyl-L-methionine = N(6)-methyladenosine(1618) in 23S rRNA + S-adenosyl-L-homocysteine + H(+). Functionally, specifically methylates the adenine in position 1618 of 23S rRNA. This chain is Ribosomal RNA large subunit methyltransferase F, found in Vibrio campbellii (strain ATCC BAA-1116).